The chain runs to 167 residues: 2-C-methyl-D-erythritol 2,4-cyclodiphosphate synthase (167 aa).

Residues Asp11 and His13 each contribute to the a divalent metal cation site. 4-CDP-2-C-methyl-D-erythritol 2-phosphate is bound by residues 11–13 (DIH) and 37–38 (HS). Residue His45 participates in a divalent metal cation binding. Residues 59–61 (DIG), 64–68 (FSDTD), 103–109 (AQAPKMA), and Arg145 each bind 4-CDP-2-C-methyl-D-erythritol 2-phosphate.

It belongs to the IspF family. Homotrimer. The cofactor is a divalent metal cation.

It catalyses the reaction 4-CDP-2-C-methyl-D-erythritol 2-phosphate = 2-C-methyl-D-erythritol 2,4-cyclic diphosphate + CMP. It functions in the pathway isoprenoid biosynthesis; isopentenyl diphosphate biosynthesis via DXP pathway; isopentenyl diphosphate from 1-deoxy-D-xylulose 5-phosphate: step 4/6. Its function is as follows. Involved in the biosynthesis of isopentenyl diphosphate (IPP) and dimethylallyl diphosphate (DMAPP), two major building blocks of isoprenoid compounds. Catalyzes the conversion of 4-diphosphocytidyl-2-C-methyl-D-erythritol 2-phosphate (CDP-ME2P) to 2-C-methyl-D-erythritol 2,4-cyclodiphosphate (ME-CPP) with a corresponding release of cytidine 5-monophosphate (CMP). In Nitrosomonas eutropha (strain DSM 101675 / C91 / Nm57), this protein is 2-C-methyl-D-erythritol 2,4-cyclodiphosphate synthase.